The primary structure comprises 609 residues: MAFQDFDKIQERVNAERKRKFRKRIILGVVSVLVVAAAIIGGAFAYVTYENKTQEQGKTTNNKSKDSPTKSESPSPKPPSSAAQTVKAGQVDKIIQTLCNSTLYKPTCQNTLKNETKKDTPQTDPRSLLKSAIVAVNDDLDQVFKRVLSLKTENKDDKDAIAQCKLLVDEAKEELGTSMKRINDSEVNNFAKIVPDLDSWLSAVMSYQETCVDGFEEGKLKTEIRKNFNSSQVLTSNSLAMIKSLDGYLSSVPKVKTRLLLEARSSAKETDHITSWLSNKERRMLKAVDVKALKPNATVAKDGSGNFTTINAALKAMPAKYQGRYTIYIKHGIYDESVIIDKKKPNVTMVGDGSQKTIVTGNKSHAKKIRTFLTATFVAQGEGFMAQSMGFRNTAGPEGHQAVAIRVQSDRSVFLNCRFEGYQDTLYAYTHRQYYRSCVIIGTVDFIFGDAAAIFQNCDIFIRKGLPGQKNTVTAQGRVDKFQTTGFVIHNCTVAPNEDLKPVKAQFKSYLGRPWKPHSRTVVMESTIEDVIDPVGWLRWQETDFAIDTLSYAEYKNDGPSGATAARVKWPGFRVLNKEEAMKFTVGPFLQGEWIQAIGSPVKLGLYDA.

A helical transmembrane segment spans residues 25–45 (IILGVVSVLVVAAAIIGGAFA). Residues Asn-51, Asn-62, Asn-100, Asn-114, Asn-183, Asn-229, Asn-296, Asn-306, Asn-346, and Asn-362 are each glycosylated (N-linked (GlcNAc...) asparagine). Residues 54–87 (QEQGKTTNNKSKDSPTKSESPSPKPPSSAAQTVK) form a disordered region. The tract at residues 89–241 (GQVDKIIQTL…QVLTSNSLAM (153 aa)) is pectinesterase inhibitor 45. Residues 296–593 (NATVAKDGSG…FTVGPFLQGE (298 aa)) are pectinesterase 45. Substrate-binding residues include Thr-371 and Gln-401. Asp-424 functions as the Proton donor; for pectinesterase activity in the catalytic mechanism. A disulfide bridge connects residues Cys-438 and Cys-458. Asp-445 functions as the Nucleophile; for pectinesterase activity in the catalytic mechanism. Asn-491 carries N-linked (GlcNAc...) asparagine glycosylation. Substrate is bound by residues Arg-513 and Trp-515.

In the N-terminal section; belongs to the PMEI family. It in the C-terminal section; belongs to the pectinesterase family. In terms of tissue distribution, expressed in flower buds and pollen.

The protein localises to the membrane. It catalyses the reaction [(1-&gt;4)-alpha-D-galacturonosyl methyl ester](n) + n H2O = [(1-&gt;4)-alpha-D-galacturonosyl](n) + n methanol + n H(+). It functions in the pathway glycan metabolism; pectin degradation; 2-dehydro-3-deoxy-D-gluconate from pectin: step 1/5. Functionally, acts in the modification of cell walls via demethylesterification of cell wall pectin. The sequence is that of Putative pectinesterase/pectinesterase inhibitor 45 (PME45) from Arabidopsis thaliana (Mouse-ear cress).